A 150-amino-acid chain; its full sequence is MANVESMIVEEKTQVKQIDREKTCPMLLRVFCSTGRHHSVSEYMFGNVPTNELQIYTWQDATLHELTSLVRDVNPDTRKKGTYFDFAVVYPNFRSNHFQMREIGVTCTGQKGIDDNKTLAQAKFSIGDFLDISITPPNRLPPTARRQRPY.

Belongs to the SAP18 family. Forms a complex with SIN3 and histone deacetylase. Interacts with the N-terminal residues of TRL. Interacts with BCD; in vitro and yeast cells.

Its subcellular location is the nucleus. It localises to the cytoplasm. Involved in the tethering of the SIN3 complex to core histone proteins. Interacts with bicoid (bcd) to repress transcription of bicoid target genes in the anterior tip of the embryo; a process known as retraction. Interacts with Trl and binds to Polycomb response elements at the bithorax complex. May contribute to the regulation of other homeotic gene expressions. This is Histone deacetylase complex subunit SAP18 (Bin1) from Drosophila melanogaster (Fruit fly).